The following is a 225-amino-acid chain: Cytidylate kinase (225 aa).

11–19 contacts ATP; that stretch reads GPAAAGKST.

Belongs to the cytidylate kinase family. Type 1 subfamily.

The protein localises to the cytoplasm. It catalyses the reaction CMP + ATP = CDP + ADP. The enzyme catalyses dCMP + ATP = dCDP + ADP. This Bacillus cytotoxicus (strain DSM 22905 / CIP 110041 / 391-98 / NVH 391-98) protein is Cytidylate kinase.